The primary structure comprises 310 residues: tRNA dimethylallyltransferase (310 aa).

Position 9-16 (9-16 (GPTAVGKT)) interacts with ATP. 11–16 (TAVGKT) contacts substrate. The tract at residues 34 to 37 (DSMQ) is interaction with substrate tRNA.

This sequence belongs to the IPP transferase family. As to quaternary structure, monomer. It depends on Mg(2+) as a cofactor.

The catalysed reaction is adenosine(37) in tRNA + dimethylallyl diphosphate = N(6)-dimethylallyladenosine(37) in tRNA + diphosphate. In terms of biological role, catalyzes the transfer of a dimethylallyl group onto the adenine at position 37 in tRNAs that read codons beginning with uridine, leading to the formation of N6-(dimethylallyl)adenosine (i(6)A). This is tRNA dimethylallyltransferase from Syntrophomonas wolfei subsp. wolfei (strain DSM 2245B / Goettingen).